The following is a 168-amino-acid chain: Nicotinamide-nucleotide adenylyltransferase (168 aa).

ATP-binding residues include Arg8, Phe9, His13, His16, Phe119, Arg121, Tyr124, Gly126, Thr127, and Arg130.

The protein belongs to the archaeal NMN adenylyltransferase family. In terms of assembly, homohexamer existing as a trimer of dimers.

The protein resides in the cytoplasm. The enzyme catalyses beta-nicotinamide D-ribonucleotide + ATP + H(+) = diphosphate + NAD(+). Its pathway is cofactor biosynthesis; NAD(+) biosynthesis; NAD(+) from nicotinamide D-ribonucleotide: step 1/1. Functionally, catalyzes the formation of NAD(+) from nicotinamide mononucleotide (NMN) and ATP. The polypeptide is Nicotinamide-nucleotide adenylyltransferase (Methanocaldococcus jannaschii (strain ATCC 43067 / DSM 2661 / JAL-1 / JCM 10045 / NBRC 100440) (Methanococcus jannaschii)).